The primary structure comprises 359 residues: Transcription elongation factor A N-terminal and central domain-containing protein (359 aa).

One can recognise a TFIIS N-terminal domain in the interval 1 to 82 (MSDKNQIIAR…AKWRGFYKST (82 aa)). The segment at 84–118 (CKPRQSPKVLHTNANKEESAAVSQDVSQDETSGSS) is disordered. Residues 104-118 (AVSQDVSQDETSGSS) show a composition bias toward polar residues. Residues 182–298 (VRSKCVELLY…EHCLPQSVDG (117 aa)) enclose the TFIIS central domain.

The sequence is that of Transcription elongation factor A N-terminal and central domain-containing protein (Tceanc) from Mus musculus (Mouse).